Here is a 91-residue protein sequence, read N- to C-terminus: Large ribosomal subunit protein eL43 (91 aa).

The C4-type zinc finger occupies 39–60 (CSFCGKDAVRRSSVGIWKCNGC).

This sequence belongs to the eukaryotic ribosomal protein eL43 family.

The sequence is that of Large ribosomal subunit protein eL43 (rpl37A) from Dictyostelium discoideum (Social amoeba).